The primary structure comprises 203 residues: Ribosomal RNA small subunit methyltransferase G (203 aa).

S-adenosyl-L-methionine-binding positions include Gly73, Leu78, 124–125 (VE), and Arg139.

Belongs to the methyltransferase superfamily. RNA methyltransferase RsmG family.

The protein resides in the cytoplasm. The catalysed reaction is guanosine(527) in 16S rRNA + S-adenosyl-L-methionine = N(7)-methylguanosine(527) in 16S rRNA + S-adenosyl-L-homocysteine. Specifically methylates the N7 position of guanine in position 527 of 16S rRNA. This is Ribosomal RNA small subunit methyltransferase G from Haemophilus influenzae (strain 86-028NP).